Here is an 83-residue protein sequence, read N- to C-terminus: Sec-independent protein translocase protein TatA (83 aa).

The helical transmembrane segment at G2–F22 threads the bilayer. Composition is skewed to basic and acidic residues over residues A50–A65 and A74–K83. The disordered stretch occupies residues A50–K83.

It belongs to the TatA/E family. The Tat system comprises two distinct complexes: a TatABC complex, containing multiple copies of TatA, TatB and TatC subunits, and a separate TatA complex, containing only TatA subunits. Substrates initially bind to the TatABC complex, which probably triggers association of the separate TatA complex to form the active translocon.

Its subcellular location is the cell inner membrane. Its function is as follows. Part of the twin-arginine translocation (Tat) system that transports large folded proteins containing a characteristic twin-arginine motif in their signal peptide across membranes. TatA could form the protein-conducting channel of the Tat system. In Saccharophagus degradans (strain 2-40 / ATCC 43961 / DSM 17024), this protein is Sec-independent protein translocase protein TatA.